The sequence spans 389 residues: MSMSNFLFTSESVTEGHPDKVADQISDSILDAIITEDKTARVACETLVTTGLAFVAGEITTSSWVDIPDIIRSTIKGIGYNDSSMGFDWSTCAVITSIDKQSPDIAQGVNPGEGLFEEQGAGDQGLMFGFACNETPVFMPMPIYYAHRITRKLAEVRKNGVLEFLRPDGKSQVTVEYDDHRPKRIDTIVVAAQHAPNVSYSMIRESIIEEVIKKVFPPELIDDKTKYFINSTGRFVIGGPMGDCGLTGRKIIADTYGGQGSHGGGCFSGKDPSKVDRTASYMARYVAKNIVAAGVADKVEVQVAYSIGVAEPVSLMIDTFGTGKIPSDRIAEIVRKLFSFKPANMIKQLRLLRPIFKKTACYGHFGRNDPDFTWEKTDMVEPIRELAGI.

H17 contacts ATP. Residue D19 participates in Mg(2+) binding. E45 provides a ligand contact to K(+). E58 and Q101 together coordinate L-methionine. The flexible loop stretch occupies residues 101–111 (QSPDIAQGVNP). ATP contacts are provided by residues 168–170 (DGK), 234–235 (RF), D243, 249–250 (RK), and K270. D243 serves as a coordination point for L-methionine. Position 274 (K274) interacts with L-methionine.

It belongs to the AdoMet synthase family. As to quaternary structure, homotetramer; dimer of dimers. Requires Mg(2+) as cofactor. It depends on K(+) as a cofactor.

Its subcellular location is the cytoplasm. It catalyses the reaction L-methionine + ATP + H2O = S-adenosyl-L-methionine + phosphate + diphosphate. Its pathway is amino-acid biosynthesis; S-adenosyl-L-methionine biosynthesis; S-adenosyl-L-methionine from L-methionine: step 1/1. Catalyzes the formation of S-adenosylmethionine (AdoMet) from methionine and ATP. The overall synthetic reaction is composed of two sequential steps, AdoMet formation and the subsequent tripolyphosphate hydrolysis which occurs prior to release of AdoMet from the enzyme. This chain is S-adenosylmethionine synthase, found in Syntrophobacter fumaroxidans (strain DSM 10017 / MPOB).